Consider the following 618-residue polypeptide: Glutamine--fructose-6-phosphate aminotransferase [isomerizing] (618 aa).

Cys2 acts as the Nucleophile; for GATase activity in catalysis. The 225-residue stretch at 2–226 (CGIVGYAGRN…DFETAVLTPD (225 aa)) folds into the Glutamine amidotransferase type-2 domain. A disordered region spans residues 72 to 91 (WATHGRPSTENAHPHNSGGN). SIS domains follow at residues 295-434 (NDDE…VRGK) and 467-608 (CAEN…IDKP). Lys613 (for Fru-6P isomerization activity) is an active-site residue.

Homodimer.

It localises to the cytoplasm. The enzyme catalyses D-fructose 6-phosphate + L-glutamine = D-glucosamine 6-phosphate + L-glutamate. Catalyzes the first step in hexosamine metabolism, converting fructose-6P into glucosamine-6P using glutamine as a nitrogen source. The sequence is that of Glutamine--fructose-6-phosphate aminotransferase [isomerizing] from Methanosarcina mazei (strain ATCC BAA-159 / DSM 3647 / Goe1 / Go1 / JCM 11833 / OCM 88) (Methanosarcina frisia).